The following is a 503-amino-acid chain: Cobyric acid synthase (503 aa).

Positions 255–444 constitute a GATase cobBQ-type domain; the sequence is AIDVAVIRCP…MHDLFHNDAF (190 aa). Catalysis depends on Cys337, which acts as the Nucleophile. His436 is an active-site residue.

Belongs to the CobB/CobQ family. CobQ subfamily.

The protein operates within cofactor biosynthesis; adenosylcobalamin biosynthesis. Functionally, catalyzes amidations at positions B, D, E, and G on adenosylcobyrinic A,C-diamide. NH(2) groups are provided by glutamine, and one molecule of ATP is hydrogenolyzed for each amidation. In Geobacillus kaustophilus (strain HTA426), this protein is Cobyric acid synthase.